Consider the following 224-residue polypeptide: MSKEIPTPYIWSYQPQTGHAAGASQDYSTQMNWFSAGPSMISHVYGIRDLRNKVLMTQAQITKTPRTIMDPPIWPASMLVQKHATPKTIALPRNHTLEQAMVNCGAQLAGGRQPSPSHIDIKDTMLAGTGIQLGEDIPSVSWIRPDGIFQLGGGSRSSFSPTQAFLTLQQASSTPRTGGVGSYQFVREFVPEVYLNPFSGPPDTFPDQFIPNYDIVTNSVDGYD.

T64 bears the Phosphothreonine; by host mark. Residues 112-154 (RQPSPSHIDIKDTMLAGTGIQLGEDIPSVSWIRPDGIFQLGGG) constitute a propeptide that is removed on maturation.

It belongs to the adenoviridae hexon-linking protein family. As to quaternary structure, interacts with the peripentonal hexons as well as the hexons in the facets. Part of a complex composed of the core-capsid bridging protein, the endosome lysis protein VI and the hexon-linking protein VIII; these interactions bridge the virus core to the capsid. In terms of processing, cleaved by the viral protease during virion maturation. May cause the middle segment to be shed from the capsid.

It localises to the virion. The protein resides in the host nucleus. Its function is as follows. Structural component of the virion that acts as a cement protein on the capsid interior and which glue the peripentonal hexons and group-of-nine hexons together. The protein is Pre-hexon-linking protein VIII of Canine adenovirus serotype 1 (strain CLL) (CAdV-1).